The following is a 373-amino-acid chain: PqqA peptide cyclase (373 aa).

The 221-residue stretch at 7–227 (ILNPVGLLAE…EVYAGVIVID (221 aa)) folds into the Radical SAM core domain. Positions 21, 25, and 28 each coordinate [4Fe-4S] cluster.

Belongs to the radical SAM superfamily. PqqE family. In terms of assembly, interacts with PqqD. The interaction is necessary for activity of PqqE. Requires [4Fe-4S] cluster as cofactor.

The catalysed reaction is [PQQ precursor protein] + S-adenosyl-L-methionine = E-Y cross-linked-[PQQ precursor protein] + 5'-deoxyadenosine + L-methionine + H(+). It functions in the pathway cofactor biosynthesis; pyrroloquinoline quinone biosynthesis. Its function is as follows. Catalyzes the cross-linking of a glutamate residue and a tyrosine residue in the PqqA protein as part of the biosynthesis of pyrroloquinoline quinone (PQQ). The chain is PqqA peptide cyclase from Methylocella silvestris (strain DSM 15510 / CIP 108128 / LMG 27833 / NCIMB 13906 / BL2).